The sequence spans 679 residues: Glycine--tRNA ligase beta subunit (679 aa).

The protein belongs to the class-II aminoacyl-tRNA synthetase family. In terms of assembly, tetramer of two alpha and two beta subunits.

The protein localises to the cytoplasm. It catalyses the reaction tRNA(Gly) + glycine + ATP = glycyl-tRNA(Gly) + AMP + diphosphate. This is Glycine--tRNA ligase beta subunit (glyS) from Bacillus subtilis (strain 168).